The following is a 1953-amino-acid chain: TATA-binding protein-associated factor mot1 (1953 aa).

Residues proline 36–valine 74 form an HEAT 1 repeat. The tract at residues arginine 79–arginine 141 is disordered. A compositionally biased stretch (basic and acidic residues) spans threonine 98–glutamate 108. The segment covering serine 113 to valine 130 has biased composition (low complexity). Residues serine 131 to arginine 141 show a composition bias toward basic and acidic residues. At serine 144 the chain carries Phosphoserine. A disordered region spans residues aspartate 240 to leucine 278. Over residues valine 242–valine 276 the composition is skewed to polar residues. 4 HEAT repeats span residues valine 358 to phenylalanine 396, serine 513 to glutamine 551, leucine 554 to phenylalanine 592, and glutamate 608 to serine 646. 2 disordered regions span residues serine 730 to proline 762 and aspartate 1078 to leucine 1103. HEAT repeat units lie at residues glutamine 1191–alanine 1229 and valine 1270–leucine 1311. The region spanning alanine 1370 to glycine 1543 is the Helicase ATP-binding domain. Aspartate 1383 to threonine 1390 is an ATP binding site. Residues aspartate 1494 to histidine 1497 carry the DEGH box motif. An HEAT 8 repeat occupies glutamate 1580 to asparagine 1623. One can recognise a Helicase C-terminal domain in the interval glycine 1725–glycine 1877. The segment at glutamine 1901 to serine 1920 is disordered.

It belongs to the SNF2/RAD54 helicase family. In terms of assembly, forms a complex with TBP which binds TATA DNA.

It is found in the nucleus. Its function is as follows. Regulates transcription in association with TATA binding protein (TBP). Removes TBP from the TATA box via its ATPase activity. This Schizosaccharomyces pombe (strain 972 / ATCC 24843) (Fission yeast) protein is TATA-binding protein-associated factor mot1.